We begin with the raw amino-acid sequence, 898 residues long: Serine/threonine-protein kinase TAO3 (898 aa).

The 254-residue stretch at 24–277 (FIGLHEIGHG…SAELLRHDFV (254 aa)) folds into the Protein kinase domain. ATP-binding positions include 30-38 (IGHGSFGAV) and K53. Catalysis depends on D147, which acts as the Proton acceptor. Disordered regions lie at residues 316-362 (TRNG…SQSS) and 405-425 (DEAGHGDPRPEPRPTQSVQSQ). Phosphoserine; by ATM is present on S324. S331, S343, S346, and S349 each carry phosphoserine. Positions 334 to 351 (GTSLNREMDSLGSNHSIP) are enriched in polar residues. Residues 352 to 362 (SMSVSTGSQSS) are compositionally biased toward low complexity. A Phosphothreonine modification is found at T357. Residue S359 is modified to Phosphoserine. Basic and acidic residues predominate over residues 405–416 (DEAGHGDPRPEP). Residue S442 is modified to Phosphoserine. Coiled coils occupy residues 452–502 (EQEN…THAN), 548–649 (FLES…HAML), and 754–879 (LKTL…DMES). Residues 565–596 (EEMNEDHSTPKKEKQERISKHKENLQHTQAEE) form a disordered region. At K830 the chain carries N6-acetyllysine.

This sequence belongs to the protein kinase superfamily. STE Ser/Thr protein kinase family. STE20 subfamily. Self-associates. Interacts with ERN1 and TRAF2. Interaction with TRAF2 is facilitated under ER stress conditions, such as treatment with tunicamycin, and may promote TRAF2 phosphorylation. Interacts (via N-terminus) with STK25; the interaction promotes STK25 abundance at the level of protein expression and/or stability. As to quaternary structure, (Microbial infection) Interacts with herpes simplex virus 1 UL37 protein. In terms of processing, autophosphorylated. Phosphorylation at Ser-324 by ATM following DNA damage is required for activation of the p38/MAPK14 stress-activated MAPK cascade. Phosphorylated at Ser-324 and on Tyr residues during T cell activation. Phosphorylated by LRRK2. As to expression, ubiquitously expressed at a low level, and highly expressed in peripheral blood leukocytes (PBLs), thymus, spleen, kidney, skeletal muscle, heart and liver.

It localises to the cytoplasm. The protein resides in the cell membrane. It is found in the membrane raft. Its subcellular location is the lipid droplet. It carries out the reaction L-seryl-[protein] + ATP = O-phospho-L-seryl-[protein] + ADP + H(+). The catalysed reaction is L-threonyl-[protein] + ATP = O-phospho-L-threonyl-[protein] + ADP + H(+). Functionally, serine/threonine-protein kinase that acts as a regulator of the p38/MAPK14 stress-activated MAPK cascade and of the MAPK8/JNK cascade. In response to DNA damage, involved in the G2/M transition DNA damage checkpoint by activating the p38/MAPK14 stress-activated MAPK cascade, probably by mediating phosphorylation of upstream MAP2K3 and MAP2K6 kinases. Inhibits basal activity of the MAPK8/JNK cascade and diminishes its activation in response to epidermal growth factor (EGF). Positively regulates canonical T cell receptor (TCR) signaling by preventing early PTPN6/SHP1-mediated inactivation of LCK, ensuring sustained TCR signaling that is required for optimal activation and differentiation of T cells. Phosphorylates PTPN6/SHP1 on 'Thr-394', leading to its polyubiquitination and subsequent proteasomal degradation. Required for cell surface expression of metalloprotease ADAM10 on type 1 transitional B cells which is necessary for their NOTCH-mediated development into marginal zone B cells. Also required for the NOTCH-mediated terminal differentiation of splenic conventional type 2 dendritic cells. Positively regulates osteoblast differentiation by acting as an upstream activator of the JNK pathway. Promotes JNK signaling in hepatocytes and positively regulates hepatocyte lipid storage by inhibiting beta-oxidation and triacylglycerol secretion while enhancing lipid synthesis. Restricts age-associated inflammation by negatively regulating differentiation of macrophages and their production of pro-inflammatory cytokines. Plays a role in negatively regulating the abundance of regulatory T cells in white adipose tissue. The protein is Serine/threonine-protein kinase TAO3 (TAOK3) of Homo sapiens (Human).